A 312-amino-acid chain; its full sequence is Olfactory receptor 51B2 (312 aa).

Residues 1–23 (MWPNITAAPFLLTGFPGLEAAHH) are Extracellular-facing. Asn4 is a glycosylation site (N-linked (GlcNAc...) asparagine). Residues 24–44 (WISIPFFAVYVCILLGNGMLL) form a helical membrane-spanning segment. Over 45 to 52 (YLIKHDHS) the chain is Cytoplasmic. Residues 53-73 (LHEPMYYFLTMLAGTDLMVTL) form a helical membrane-spanning segment. At 74-97 (TTMPTVMGILWVNHREISSVGCFL) the chain is on the extracellular side. A disulfide bond links Cys95 and Cys187. The helical transmembrane segment at 98-118 (QAYFIHSLSVVESGSLLAMAY) threads the bilayer. The Cytoplasmic portion of the chain corresponds to 119–137 (DCFIAIRNPLRYASILTNT). A helical transmembrane segment spans residues 138-158 (RVIALGVGVFLRGFVSILPVI). The Extracellular segment spans residues 159–194 (LRLFSFSYCKSHVITRAFCLHQEIMRLACADITFNR). The helical transmembrane segment at 195–215 (LYPVILISLTIFLDCLIILFS) threads the bilayer. Residues 216–235 (YILILNTVIGIASGEERAKA) are Cytoplasmic-facing. The chain crosses the membrane as a helical span at residues 236 to 256 (LNTCISHISCVLIFYVTVMGL). Over 257–271 (TFIYRFGKNVPEVVH) the chain is Extracellular. Residues 272-292 (IIMSYIYFLFPPLMNPVIYSI) form a helical membrane-spanning segment. Residues 293 to 312 (KTKQIQYGIIRLLSKHRFSS) are Cytoplasmic-facing.

This sequence belongs to the G-protein coupled receptor 1 family. Post-translationally, ubiquitinated by the CRL2(FEM1A) and CRL2(FEM1C) complexes, which recognize the -Lys-Xaa-Xaa-Arg C-degron at the C-terminus, leading to its degradation.

Its subcellular location is the cell membrane. Odorant receptor. This Homo sapiens (Human) protein is Olfactory receptor 51B2 (OR51B2).